The sequence spans 339 residues: Uroporphyrinogen decarboxylase (339 aa).

Residues 23–27, Asp72, Tyr147, Thr202, and His315 contribute to the substrate site; that span reads RQAGR.

This sequence belongs to the uroporphyrinogen decarboxylase family. Homodimer.

It localises to the cytoplasm. The catalysed reaction is uroporphyrinogen III + 4 H(+) = coproporphyrinogen III + 4 CO2. Its pathway is porphyrin-containing compound metabolism; protoporphyrin-IX biosynthesis; coproporphyrinogen-III from 5-aminolevulinate: step 4/4. In terms of biological role, catalyzes the decarboxylation of four acetate groups of uroporphyrinogen-III to yield coproporphyrinogen-III. The polypeptide is Uroporphyrinogen decarboxylase (Geotalea daltonii (strain DSM 22248 / JCM 15807 / FRC-32) (Geobacter daltonii)).